Here is a 546-residue protein sequence, read N- to C-terminus: CTP synthase (546 aa).

The segment at 1–265 (MTKYVFVTGG…DEIVCHKLGI (265 aa)) is amidoligase domain. S13 serves as a coordination point for CTP. S13 contributes to the UTP binding site. Residues 14–19 (SLGKGI) and D71 contribute to the ATP site. The Mg(2+) site is built by D71 and E139. Residues 146 to 148 (DIE), 186 to 191 (KTKPTQ), and K222 each bind CTP. Residues 186 to 191 (KTKPTQ) and K222 each bind UTP. The Glutamine amidotransferase type-1 domain occupies 290 to 543 (DIAFVGKYVD…VKAAIARHSA (254 aa)). G351 contacts L-glutamine. The Nucleophile; for glutamine hydrolysis role is filled by C378. Residues 379–382 (LGMQ), E402, and R469 contribute to the L-glutamine site. Residues H516 and E518 contribute to the active site.

This sequence belongs to the CTP synthase family. Homotetramer.

The catalysed reaction is UTP + L-glutamine + ATP + H2O = CTP + L-glutamate + ADP + phosphate + 2 H(+). The enzyme catalyses L-glutamine + H2O = L-glutamate + NH4(+). It catalyses the reaction UTP + NH4(+) + ATP = CTP + ADP + phosphate + 2 H(+). It functions in the pathway pyrimidine metabolism; CTP biosynthesis via de novo pathway; CTP from UDP: step 2/2. With respect to regulation, allosterically activated by GTP, when glutamine is the substrate; GTP has no effect on the reaction when ammonia is the substrate. The allosteric effector GTP functions by stabilizing the protein conformation that binds the tetrahedral intermediate(s) formed during glutamine hydrolysis. Inhibited by the product CTP, via allosteric rather than competitive inhibition. Its function is as follows. Catalyzes the ATP-dependent amination of UTP to CTP with either L-glutamine or ammonia as the source of nitrogen. Regulates intracellular CTP levels through interactions with the four ribonucleotide triphosphates. This is CTP synthase from Azoarcus sp. (strain BH72).